A 295-amino-acid polypeptide reads, in one-letter code: 4-diphosphocytidyl-2-C-methyl-D-erythritol kinase (295 aa).

Lysine 25 is an active-site residue. Residue proline 108–serine 118 coordinates ATP. The active site involves aspartate 150.

Belongs to the GHMP kinase family. IspE subfamily.

The catalysed reaction is 4-CDP-2-C-methyl-D-erythritol + ATP = 4-CDP-2-C-methyl-D-erythritol 2-phosphate + ADP + H(+). It participates in isoprenoid biosynthesis; isopentenyl diphosphate biosynthesis via DXP pathway; isopentenyl diphosphate from 1-deoxy-D-xylulose 5-phosphate: step 3/6. Functionally, catalyzes the phosphorylation of the position 2 hydroxy group of 4-diphosphocytidyl-2C-methyl-D-erythritol. This is 4-diphosphocytidyl-2-C-methyl-D-erythritol kinase from Pasteurella multocida (strain Pm70).